Consider the following 395-residue polypeptide: Univin (395 aa).

A signal peptide spans 1 to 19; that stretch reads MDVSKVLILTLIWLLTADS. Positions 20-272 are excised as a propeptide; the sequence is APPDYVTLTR…CSKRNRRNKR (253 aa). A glycan (N-linked (GlcNAc...) asparagine) is linked at Asn-50. The segment at 69–97 is disordered; the sequence is EGAAASRGGETEIGKEEEEDGRPCSETKL. N-linked (GlcNAc...) asparagine glycans are attached at residues Asn-116 and Asn-336. Disulfide bonds link Cys-294–Cys-360, Cys-323–Cys-392, and Cys-327–Cys-394.

The protein belongs to the TGF-beta family. In terms of assembly, homodimer; disulfide-linked.

Its subcellular location is the secreted. Functionally, could have a critical role in early developmental decisions in the sea urchin embryo. This chain is Univin, found in Strongylocentrotus purpuratus (Purple sea urchin).